Consider the following 201-residue polypeptide: MTDPVTLDGQGSIGAFDEKRAEAAVRELLIAVGEDPDREGLRETPGRVARAYKEIFAGLYQEPEDVLTTTFDLGHDEMVLVKDIEVFSTCEHHLVPFRGVAHVGYIPATTGKITGLSKLARLVDVYARRPQVQERLTTQIAESLMSILEPRGVIVVVECEHMCMSMRGIRKPGAKTLTSAVRGQLRDPATRAEAMSLIMAR.

Cys90, His93, and Cys163 together coordinate Zn(2+).

It belongs to the GTP cyclohydrolase I family. As to quaternary structure, homomer.

It catalyses the reaction GTP + H2O = 7,8-dihydroneopterin 3'-triphosphate + formate + H(+). The protein operates within cofactor biosynthesis; 7,8-dihydroneopterin triphosphate biosynthesis; 7,8-dihydroneopterin triphosphate from GTP: step 1/1. The polypeptide is GTP cyclohydrolase 1 (Streptomyces griseus subsp. griseus (strain JCM 4626 / CBS 651.72 / NBRC 13350 / KCC S-0626 / ISP 5235)).